The primary structure comprises 340 residues: Agmatinase, mitochondrial (340 aa).

Mn(2+) is bound by residues H150, D173, H175, D177, D264, and D266.

The protein belongs to the arginase family. Agmatinase subfamily. Requires Mn(2+) as cofactor.

The protein localises to the mitochondrion. It catalyses the reaction agmatine + H2O = urea + putrescine. Its pathway is amine and polyamine biosynthesis; putrescine biosynthesis via agmatine pathway; putrescine from agmatine: step 1/1. The sequence is that of Agmatinase, mitochondrial (AGMAT) from Gallus gallus (Chicken).